The following is a 306-amino-acid chain: D-alanine--D-alanine ligase (306 aa).

The ATP-grasp domain occupies 100-295 (KQIFRRAGLP…FGQLLERLME (196 aa)). 127-180 (RLPYPLFVKSNTGGSSLRLGRARNRAELDDIMGQIFAAGEEVIMEPVLPGREVT) serves as a coordination point for ATP. Residues D249, E262, and N264 each contribute to the Mg(2+) site.

This sequence belongs to the D-alanine--D-alanine ligase family. The cofactor is Mg(2+). Requires Mn(2+) as cofactor.

The protein resides in the cytoplasm. The enzyme catalyses 2 D-alanine + ATP = D-alanyl-D-alanine + ADP + phosphate + H(+). The protein operates within cell wall biogenesis; peptidoglycan biosynthesis. Cell wall formation. This chain is D-alanine--D-alanine ligase, found in Desulfovibrio desulfuricans (strain ATCC 27774 / DSM 6949 / MB).